We begin with the raw amino-acid sequence, 204 residues long: Probable nicotinate-nucleotide adenylyltransferase (204 aa).

The protein belongs to the NadD family.

It catalyses the reaction nicotinate beta-D-ribonucleotide + ATP + H(+) = deamido-NAD(+) + diphosphate. It participates in cofactor biosynthesis; NAD(+) biosynthesis; deamido-NAD(+) from nicotinate D-ribonucleotide: step 1/1. In terms of biological role, catalyzes the reversible adenylation of nicotinate mononucleotide (NaMN) to nicotinic acid adenine dinucleotide (NaAD). The protein is Probable nicotinate-nucleotide adenylyltransferase of Dehalococcoides mccartyi (strain ATCC BAA-2100 / JCM 16839 / KCTC 5957 / BAV1).